A 328-amino-acid chain; its full sequence is Malate dehydrogenase (328 aa).

12–18 (GAAGQIG) provides a ligand contact to NAD(+). Substrate is bound by residues R95 and R101. NAD(+) contacts are provided by residues N108, Q115, and 132 to 134 (VGN). Positions 134 and 165 each coordinate substrate. The active-site Proton acceptor is the H190.

The protein belongs to the LDH/MDH superfamily. MDH type 2 family.

The enzyme catalyses (S)-malate + NAD(+) = oxaloacetate + NADH + H(+). In terms of biological role, catalyzes the reversible oxidation of malate to oxaloacetate. The polypeptide is Malate dehydrogenase (Acidovorax ebreus (strain TPSY) (Diaphorobacter sp. (strain TPSY))).